The primary structure comprises 371 residues: Bifunctional enzyme IspD/IspF (371 aa).

A 2-C-methyl-D-erythritol 4-phosphate cytidylyltransferase region spans residues 1–210; that stretch reads MSEMSLIMLA…LNLPTPSFEI (210 aa). Positions 211 to 371 are 2-C-methyl-D-erythritol 2,4-cyclodiphosphate synthase; the sequence is FTGNGFDVHE…NLKYFDWTRL (161 aa). D217 and H219 together coordinate a divalent metal cation. 4-CDP-2-C-methyl-D-erythritol 2-phosphate contacts are provided by residues 217–219 and 243–244; these read DVH and HS. H251 serves as a coordination point for a divalent metal cation. Residues 265 to 267, 270 to 274, 341 to 344, F348, and R351 contribute to the 4-CDP-2-C-methyl-D-erythritol 2-phosphate site; these read DIG, YPDTD, and TTTE.

The protein in the N-terminal section; belongs to the IspD/TarI cytidylyltransferase family. IspD subfamily. This sequence in the C-terminal section; belongs to the IspF family. It depends on a divalent metal cation as a cofactor.

It catalyses the reaction 2-C-methyl-D-erythritol 4-phosphate + CTP + H(+) = 4-CDP-2-C-methyl-D-erythritol + diphosphate. The enzyme catalyses 4-CDP-2-C-methyl-D-erythritol 2-phosphate = 2-C-methyl-D-erythritol 2,4-cyclic diphosphate + CMP. Its pathway is isoprenoid biosynthesis; isopentenyl diphosphate biosynthesis via DXP pathway; isopentenyl diphosphate from 1-deoxy-D-xylulose 5-phosphate: step 2/6. The protein operates within isoprenoid biosynthesis; isopentenyl diphosphate biosynthesis via DXP pathway; isopentenyl diphosphate from 1-deoxy-D-xylulose 5-phosphate: step 4/6. In terms of biological role, bifunctional enzyme that catalyzes the formation of 4-diphosphocytidyl-2-C-methyl-D-erythritol from CTP and 2-C-methyl-D-erythritol 4-phosphate (MEP) (IspD), and catalyzes the conversion of 4-diphosphocytidyl-2-C-methyl-D-erythritol 2-phosphate (CDP-ME2P) to 2-C-methyl-D-erythritol 2,4-cyclodiphosphate (ME-CPP) with a corresponding release of cytidine 5-monophosphate (CMP) (IspF). The sequence is that of Bifunctional enzyme IspD/IspF from Campylobacter jejuni (strain RM1221).